A 582-amino-acid polypeptide reads, in one-letter code: 5-aminolevulinate synthase, erythroid-specific, mitochondrial (582 aa).

Residue arginine 158 coordinates succinyl-CoA. Residues cysteine 253 and phenylalanine 254 each contribute to the pyridoxal 5'-phosphate site. Serine 275 and arginine 294 together coordinate succinyl-CoA. 3 residues coordinate pyridoxal 5'-phosphate: serine 327, histidine 355, and threonine 383. The active site involves lysine 386. Lysine 386 carries the N6-(pyridoxal phosphate)lysine modification. Residues threonine 415 and threonine 416 each contribute to the pyridoxal 5'-phosphate site. Residue threonine 503 participates in succinyl-CoA binding.

It belongs to the class-II pyridoxal-phosphate-dependent aminotransferase family. Homodimer. The cofactor is pyridoxal 5'-phosphate.

The protein localises to the mitochondrion inner membrane. The catalysed reaction is succinyl-CoA + glycine + H(+) = 5-aminolevulinate + CO2 + CoA. The protein operates within porphyrin-containing compound metabolism; protoporphyrin-IX biosynthesis; 5-aminolevulinate from glycine: step 1/1. Functionally, catalyzes the pyridoxal 5'-phosphate (PLP)-dependent condensation of succinyl-CoA and glycine to form aminolevulinic acid (ALA), with CoA and CO2 as by-products. Contributes significantly to heme formation during erythropoiesis. In Opsanus tau (Oyster toadfish), this protein is 5-aminolevulinate synthase, erythroid-specific, mitochondrial (alas2).